Reading from the N-terminus, the 458-residue chain is ATP synthase subunit beta (458 aa).

148-155 is an ATP binding site; the sequence is GGAGVGKT.

Belongs to the ATPase alpha/beta chains family. In terms of assembly, F-type ATPases have 2 components, CF(1) - the catalytic core - and CF(0) - the membrane proton channel. CF(1) has five subunits: alpha(3), beta(3), gamma(1), delta(1), epsilon(1). CF(0) has three main subunits: a(1), b(2) and c(9-12). The alpha and beta chains form an alternating ring which encloses part of the gamma chain. CF(1) is attached to CF(0) by a central stalk formed by the gamma and epsilon chains, while a peripheral stalk is formed by the delta and b chains.

The protein localises to the cell inner membrane. The catalysed reaction is ATP + H2O + 4 H(+)(in) = ADP + phosphate + 5 H(+)(out). Functionally, produces ATP from ADP in the presence of a proton gradient across the membrane. The catalytic sites are hosted primarily by the beta subunits. The protein is ATP synthase subunit beta of Alkalilimnicola ehrlichii (strain ATCC BAA-1101 / DSM 17681 / MLHE-1).